Reading from the N-terminus, the 443-residue chain is UDP-N-acetylmuramate--L-alanine ligase (443 aa).

Residue 111 to 117 (GAHGKTS) coordinates ATP.

It belongs to the MurCDEF family.

It localises to the cytoplasm. The catalysed reaction is UDP-N-acetyl-alpha-D-muramate + L-alanine + ATP = UDP-N-acetyl-alpha-D-muramoyl-L-alanine + ADP + phosphate + H(+). The protein operates within cell wall biogenesis; peptidoglycan biosynthesis. In terms of biological role, cell wall formation. In Levilactobacillus brevis (strain ATCC 367 / BCRC 12310 / CIP 105137 / JCM 1170 / LMG 11437 / NCIMB 947 / NCTC 947) (Lactobacillus brevis), this protein is UDP-N-acetylmuramate--L-alanine ligase.